Reading from the N-terminus, the 318-residue chain is Guanidinopropionase (318 aa).

Mn(2+) contacts are provided by His-126, Asp-148, His-150, Asp-152, Asp-240, and Asp-242.

Belongs to the arginase family. Agmatinase subfamily. As to quaternary structure, homohexamer. Requires Mn(2+) as cofactor.

The catalysed reaction is 3-guanidinopropanoate + H2O = urea + beta-alanine. Functionally, catalyzes the hydrolysis of 3-guanidinopropanoate to beta-alanine and urea. Possesses low activity against 4-guanidinobutanoate. Has no activity against arginine and agmatine. The chain is Guanidinopropionase (gpuA) from Pseudomonas aeruginosa (strain ATCC 15692 / DSM 22644 / CIP 104116 / JCM 14847 / LMG 12228 / 1C / PRS 101 / PAO1).